The primary structure comprises 521 residues: uncharacterized protein (521 aa).

The stretch at 14-41 (QFQQMQHQMQQQQQQQMQQQQQQQQQQQ) forms a coiled coil. Composition is skewed to low complexity over residues 238–266 (LSGSTSTTNNNNTTTTTTTTSSNNITSSS), 275–353 (SSTS…NNNN), and 423–482 (PRLS…PNNP). Disordered stretches follow at residues 238–357 (LSGS…ISGF) and 413–491 (TAVA…SNNG).

This is an uncharacterized protein from Dictyostelium discoideum (Social amoeba).